The following is a 179-amino-acid chain: Peptidyl-prolyl cis-trans isomerase A (179 aa).

The PPIase cyclophilin-type domain occupies 15 to 178 (FFDITIGGVE…KPVVIANCGQ (164 aa)).

Belongs to the cyclophilin-type PPIase family.

The protein localises to the cytoplasm. It localises to the cytosol. It catalyses the reaction [protein]-peptidylproline (omega=180) = [protein]-peptidylproline (omega=0). Its activity is regulated as follows. Binds cyclosporin A (CsA). CsA mediates some of its effects via an inhibitory action on PPIase. Its function is as follows. PPIase that catalyzes the cis-trans isomerization of proline imidic peptide bonds in oligopeptides and may therefore assist protein folding. In Dictyostelium discoideum (Social amoeba), this protein is Peptidyl-prolyl cis-trans isomerase A (ppiA).